The sequence spans 229 residues: MRDAWRFAVGTLTALPVRPPTRVDRDTARRAMLLAPLAALPLGLLVAAVLAAGRAVELPPLAVGLLAVGALAASSRALHWDGLSDTVDGLAASYDPARSLAVMRSGTSGPAGVLATVVVAGVQAAALATLLDQPLLAGALVCLSRCALWIVCCTRVPAARADGLGADVARTVPLPVAVLGGLLLSAVGGLVVLVLVRRTVRRFGGVTGDVMGAAVELALAATLLAWAAR.

The next 6 helical transmembrane spans lie at 31–51 (AMLL…AVLA), 55–75 (AVEL…AASS), 111–131 (AGVL…ATLL), 134–154 (PLLA…VCCT), 176–196 (VAVL…LVLV), and 208–228 (GDVM…AWAA).

Belongs to the CobS family. Mg(2+) serves as cofactor.

It is found in the cell membrane. It carries out the reaction alpha-ribazole + adenosylcob(III)inamide-GDP = adenosylcob(III)alamin + GMP + H(+). The enzyme catalyses alpha-ribazole 5'-phosphate + adenosylcob(III)inamide-GDP = adenosylcob(III)alamin 5'-phosphate + GMP + H(+). The protein operates within cofactor biosynthesis; adenosylcobalamin biosynthesis; adenosylcobalamin from cob(II)yrinate a,c-diamide: step 7/7. Functionally, joins adenosylcobinamide-GDP and alpha-ribazole to generate adenosylcobalamin (Ado-cobalamin). Also synthesizes adenosylcobalamin 5'-phosphate from adenosylcobinamide-GDP and alpha-ribazole 5'-phosphate. The protein is Adenosylcobinamide-GDP ribazoletransferase of Nocardioides sp. (strain ATCC BAA-499 / JS614).